The chain runs to 176 residues: Probable chorismate pyruvate-lyase (176 aa).

R70, L108, and E166 together coordinate substrate.

It belongs to the UbiC family.

The protein resides in the cytoplasm. It carries out the reaction chorismate = 4-hydroxybenzoate + pyruvate. It functions in the pathway cofactor biosynthesis; ubiquinone biosynthesis. Its function is as follows. Removes the pyruvyl group from chorismate, with concomitant aromatization of the ring, to provide 4-hydroxybenzoate (4HB) for the ubiquinone pathway. This is Probable chorismate pyruvate-lyase from Dechloromonas aromatica (strain RCB).